Reading from the N-terminus, the 285-residue chain is NAD kinase (285 aa).

The active-site Proton acceptor is the D68. NAD(+) contacts are provided by residues 68–69 (DG), 142–143 (ND), R153, K170, D172, 183–188 (TAYNLS), and Q242.

It belongs to the NAD kinase family. A divalent metal cation is required as a cofactor.

It localises to the cytoplasm. The enzyme catalyses NAD(+) + ATP = ADP + NADP(+) + H(+). In terms of biological role, involved in the regulation of the intracellular balance of NAD and NADP, and is a key enzyme in the biosynthesis of NADP. Catalyzes specifically the phosphorylation on 2'-hydroxyl of the adenosine moiety of NAD to yield NADP. In Syntrophotalea carbinolica (strain DSM 2380 / NBRC 103641 / GraBd1) (Pelobacter carbinolicus), this protein is NAD kinase.